Consider the following 463-residue polypeptide: L-seryl-tRNA(Sec) selenium transferase (463 aa).

An N6-(pyridoxal phosphate)lysine modification is found at Lys295.

The protein belongs to the SelA family. As to quaternary structure, homodecamer; pentamer of dimers. Binds only one seryl-tRNA(Sec) per dimer. The cofactor is pyridoxal 5'-phosphate.

It is found in the cytoplasm. The catalysed reaction is L-seryl-tRNA(Sec) + selenophosphate + H(+) = L-selenocysteinyl-tRNA(Sec) + phosphate. The protein operates within aminoacyl-tRNA biosynthesis; selenocysteinyl-tRNA(Sec) biosynthesis; selenocysteinyl-tRNA(Sec) from L-seryl-tRNA(Sec) (bacterial route): step 1/1. Functionally, converts seryl-tRNA(Sec) to selenocysteinyl-tRNA(Sec) required for selenoprotein biosynthesis. This Escherichia coli (strain 55989 / EAEC) protein is L-seryl-tRNA(Sec) selenium transferase.